A 106-amino-acid chain; its full sequence is Large ribosomal subunit protein P1B (106 aa).

N-acetylserine is present on Ser-2. Low complexity predominate over residues 69-82 (AGAASGAAAAGGDA). Residues 69 to 106 (AGAASGAAAAGGDAAAEEEKEEEAAEESDDDMGFGLFD) are disordered. Positions 83–100 (AAEEEKEEEAAEESDDDM) are enriched in acidic residues. Ser-96 bears the Phosphoserine mark.

It belongs to the eukaryotic ribosomal protein P1/P2 family. Component of the large ribosomal subunit (LSU). Mature yeast ribosomes consist of a small (40S) and a large (60S) subunit. The 40S small subunit contains 1 molecule of ribosomal RNA (18S rRNA) and 33 different proteins (encoded by 57 genes). The large 60S subunit contains 3 rRNA molecules (25S, 5.8S and 5S rRNA) and 46 different proteins (encoded by 81 genes). The 5 acidic ribosomal P-proteins form the stalk structure of the 60S subunit. They are organized as a pentameric complex in which uL10/P0 interacts with 2 heterodimers, P1A-P2B and P1B-P2A.

Its subcellular location is the cytoplasm. Functionally, component of the ribosome, a large ribonucleoprotein complex responsible for the synthesis of proteins in the cell. The small ribosomal subunit (SSU) binds messenger RNAs (mRNAs) and translates the encoded message by selecting cognate aminoacyl-transfer RNA (tRNA) molecules. The large subunit (LSU) contains the ribosomal catalytic site termed the peptidyl transferase center (PTC), which catalyzes the formation of peptide bonds, thereby polymerizing the amino acids delivered by tRNAs into a polypeptide chain. The nascent polypeptides leave the ribosome through a tunnel in the LSU and interact with protein factors that function in enzymatic processing, targeting, and the membrane insertion of nascent chains at the exit of the ribosomal tunnel. This is Large ribosomal subunit protein P1B from Saccharomyces cerevisiae (strain ATCC 204508 / S288c) (Baker's yeast).